A 317-amino-acid chain; its full sequence is MSFSSEVKEELVKKTDSARHCQIAEFAAFMGMSGNVSETDNGELCLEFVTENELSVEKFSDLLLRIFSIKMDADTNEMVKNGKETIIRITRQSDVAKILQTLKWCDDRFTQIEPVFVDARIVAMDCCKKAFIRGAFMERGSISDPNKFYHYEIVCKYEEDADILMDMLRFFGLDAKVIVRKNSFVVYMKEGNNITDTLNLMGAVVSQMNLYNVMILKGISNDVNRKVNCETANLNKTIEAAVKQIKDIELIRDTVGLDSLSDSLMQVALLRLENPDMSLQGLGELLDPQVGKSGVNHRLRKIGEKADELRQSMGISV.

The H-T-H motif DNA-binding region spans Ser-278 to Gln-311.

The protein belongs to the WhiA family.

In terms of biological role, involved in cell division and chromosome segregation. The sequence is that of Probable cell division protein WhiA from Lachnospira eligens (strain ATCC 27750 / DSM 3376 / VPI C15-48 / C15-B4) (Eubacterium eligens).